We begin with the raw amino-acid sequence, 504 residues long: Glycine--tRNA ligase (504 aa).

2 residues coordinate substrate: Arg-99 and Glu-189. ATP-binding positions include 221–223 (RNE), 231–236 (FRVREL), 306–307 (EI), and 365–368 (GVDR). 236–240 (LEQME) provides a ligand contact to substrate. 361 to 365 (EPSAG) provides a ligand contact to substrate.

This sequence belongs to the class-II aminoacyl-tRNA synthetase family. Homodimer.

It localises to the cytoplasm. It carries out the reaction tRNA(Gly) + glycine + ATP = glycyl-tRNA(Gly) + AMP + diphosphate. In terms of biological role, catalyzes the attachment of glycine to tRNA(Gly). This is Glycine--tRNA ligase from Deinococcus geothermalis (strain DSM 11300 / CIP 105573 / AG-3a).